We begin with the raw amino-acid sequence, 195 residues long: MTVGLFGGSFNPPHVAHLVVAEVVRDQFGLDEVWWIPNATPPHKPNDELAAVQHRLAMTERTVEGNPAFRVCGVEVERDGVSYTVETLRVLQDQHPDTDFALILGSDSLDHFADWHRPDEIAERVPFIVYKRPGAIESVADPRFVNDVRYAAAPVMEISGTEVRARRRAGRSIRYLVPEAVRAYIDTHDLYRPTD.

Belongs to the NadD family.

It catalyses the reaction nicotinate beta-D-ribonucleotide + ATP + H(+) = deamido-NAD(+) + diphosphate. It functions in the pathway cofactor biosynthesis; NAD(+) biosynthesis; deamido-NAD(+) from nicotinate D-ribonucleotide: step 1/1. Its function is as follows. Catalyzes the reversible adenylation of nicotinate mononucleotide (NaMN) to nicotinic acid adenine dinucleotide (NaAD). The polypeptide is Probable nicotinate-nucleotide adenylyltransferase (Salinibacter ruber (strain DSM 13855 / M31)).